Reading from the N-terminus, the 64-residue chain is Alpha-mammal toxin Lqq5 (64 aa).

Residues 2-64 (KDGYIVDDKN…VSIKEKGRCN (63 aa)) enclose the LCN-type CS-alpha/beta domain. 4 disulfide bridges follow: C12-C63, C16-C36, C22-C46, and C26-C48. N64 carries the post-translational modification Asparagine amide.

Belongs to the long (4 C-C) scorpion toxin superfamily. Sodium channel inhibitor family. Alpha subfamily. In terms of tissue distribution, expressed by the venom gland.

The protein resides in the secreted. Its function is as follows. Alpha toxins bind voltage-independently at site-3 of sodium channels (Nav) and inhibit the inactivation of the activated channels, thereby blocking neuronal transmission. Is active on mammals and bind with high affinity to rat brain synaptosome. Does not display phospholipid-binding activity. The chain is Alpha-mammal toxin Lqq5 from Leiurus quinquestriatus quinquestriatus (Egyptian scorpion).